The following is a 194-amino-acid chain: ATP-dependent Clp protease proteolytic subunit (194 aa).

The Nucleophile role is filled by Ser-98. Residue His-123 is part of the active site.

The protein belongs to the peptidase S14 family. As to quaternary structure, fourteen ClpP subunits assemble into 2 heptameric rings which stack back to back to give a disk-like structure with a central cavity, resembling the structure of eukaryotic proteasomes.

The protein resides in the cytoplasm. The catalysed reaction is Hydrolysis of proteins to small peptides in the presence of ATP and magnesium. alpha-casein is the usual test substrate. In the absence of ATP, only oligopeptides shorter than five residues are hydrolyzed (such as succinyl-Leu-Tyr-|-NHMec, and Leu-Tyr-Leu-|-Tyr-Trp, in which cleavage of the -Tyr-|-Leu- and -Tyr-|-Trp bonds also occurs).. In terms of biological role, cleaves peptides in various proteins in a process that requires ATP hydrolysis. Has a chymotrypsin-like activity. Plays a major role in the degradation of misfolded proteins. This is ATP-dependent Clp protease proteolytic subunit from Clostridium kluyveri (strain NBRC 12016).